We begin with the raw amino-acid sequence, 387 residues long: O-methyltransferase lepI (387 aa).

135–148 (FENLWPVLMALPDF) is a substrate binding site. Positions 175-195 (CFHWLATQPTRIANFKVLLTD) are substrate binding. Residues 227–228 (GG), aspartate 252, 275–276 (NF), and arginine 291 each bind S-adenosyl-L-methionine.

Belongs to the class I-like SAM-binding methyltransferase superfamily. Cation-independent O-methyltransferase family.

In terms of biological role, O-methyltransferase; part of the gene cluster 23 that mediates the biosynthesis of a family of 2-pyridones known as leporins. The hybrid PKS-NRPS synthetase lepA and the enoyl reductase lepG are responsible for fusion of phenylalanine with a hexaketide and subsequent release of the stable tetramic acid precursor, pre-leporin C. Because lepA lacks a designated enoylreductase (ER) domain, the required activity is provided the enoyl reductase lepG. It is possible that the dehydrogenase lepF also participates in production of pre-leporin C. Cytochrome P450 monooxygenase lepH is then required for the ring expansion step to yield leporin C. Leporin C is then presumably further oxidized by the N-hydroxylase lepD to form leporin B. LepI may possess a function in biosynthesis upstream of lepA. Leporin B is further oxidized in the presence of ferric ion to give the leporin B trimer-iron chelate, but whether or not this reaction is catalyzed by an enzyme in the pathway or by ferric ion is not determined yet. In Aspergillus flavus (strain ATCC 200026 / FGSC A1120 / IAM 13836 / NRRL 3357 / JCM 12722 / SRRC 167), this protein is O-methyltransferase lepI.